The primary structure comprises 357 residues: Non-structural protein NS2 (357 aa).

2 disordered regions span residues 162–199 and 228–268; these read QNER…AKEM and LDEK…KTHI. Composition is skewed to acidic residues over residues 230–243 and 250–260; these read EKDE…EDEE and DDDEQGEDASD.

Belongs to the orbivirus non-structural protein NS2 family.

Its function is as follows. Single-stranded RNA-binding protein. This is Non-structural protein NS2 (Segment-8) from Antilocapra americana (Pronghorn).